The primary structure comprises 353 residues: S-adenosylmethionine:tRNA ribosyltransferase-isomerase (353 aa).

This sequence belongs to the QueA family. As to quaternary structure, monomer.

It is found in the cytoplasm. It carries out the reaction 7-aminomethyl-7-carbaguanosine(34) in tRNA + S-adenosyl-L-methionine = epoxyqueuosine(34) in tRNA + adenine + L-methionine + 2 H(+). Its pathway is tRNA modification; tRNA-queuosine biosynthesis. Functionally, transfers and isomerizes the ribose moiety from AdoMet to the 7-aminomethyl group of 7-deazaguanine (preQ1-tRNA) to give epoxyqueuosine (oQ-tRNA). The chain is S-adenosylmethionine:tRNA ribosyltransferase-isomerase from Paraburkholderia phymatum (strain DSM 17167 / CIP 108236 / LMG 21445 / STM815) (Burkholderia phymatum).